The sequence spans 235 residues: Phosphoribosylaminoimidazole-succinocarboxamide synthase (235 aa).

The protein belongs to the SAICAR synthetase family.

The catalysed reaction is 5-amino-1-(5-phospho-D-ribosyl)imidazole-4-carboxylate + L-aspartate + ATP = (2S)-2-[5-amino-1-(5-phospho-beta-D-ribosyl)imidazole-4-carboxamido]succinate + ADP + phosphate + 2 H(+). It participates in purine metabolism; IMP biosynthesis via de novo pathway; 5-amino-1-(5-phospho-D-ribosyl)imidazole-4-carboxamide from 5-amino-1-(5-phospho-D-ribosyl)imidazole-4-carboxylate: step 1/2. This Streptococcus agalactiae serotype Ia (strain ATCC 27591 / A909 / CDC SS700) protein is Phosphoribosylaminoimidazole-succinocarboxamide synthase.